A 217-amino-acid chain; its full sequence is Chorionic somatomammotropin hormone 2 (217 aa).

An N-terminal signal peptide occupies residues 1-26; that stretch reads MAAGSRTSLLLAFALLCLPWLQEAGA. His44 is a binding site for Zn(2+). An intrachain disulfide couples Cys79 to Cys191. Glu200 contacts Zn(2+). A disulfide bridge links Cys208 with Cys215.

Belongs to the somatotropin/prolactin family. Can be found in a monomeric as well as dimeric form.

The protein resides in the secreted. Produced only during pregnancy and is involved in stimulating lactation, fetal growth and metabolism. Does not interact with GHR but only activates PRLR through zinc-induced dimerization. In Homo sapiens (Human), this protein is Chorionic somatomammotropin hormone 2 (CSH2).